The primary structure comprises 243 residues: Uroporphyrinogen-III C-methyltransferase (243 aa).

S-adenosyl-L-homocysteine-binding positions include Pro12, 88–90 (SGD), 118–119 (ST), Met166, and Ala195.

The protein belongs to the precorrin methyltransferase family.

It carries out the reaction uroporphyrinogen III + 2 S-adenosyl-L-methionine = precorrin-2 + 2 S-adenosyl-L-homocysteine + H(+). The protein operates within cofactor biosynthesis; adenosylcobalamin biosynthesis; precorrin-2 from uroporphyrinogen III: step 1/1. It participates in porphyrin-containing compound metabolism; siroheme biosynthesis; precorrin-2 from uroporphyrinogen III: step 1/1. Its function is as follows. Catalyzes the two successive C-2 and C-7 methylation reactions involved in the conversion of uroporphyrinogen III to precorrin-2 via the intermediate formation of precorrin-1. It is a step in the biosynthesis of both cobalamin (vitamin B12) and siroheme. The sequence is that of Uroporphyrinogen-III C-methyltransferase from Synechococcus elongatus (strain ATCC 33912 / PCC 7942 / FACHB-805) (Anacystis nidulans R2).